We begin with the raw amino-acid sequence, 737 residues long: Pentatricopeptide repeat-containing protein At3g49740 (737 aa).

PPR repeat units follow at residues 20 to 55, 56 to 90, 91 to 121, 122 to 152, 154 to 188, 189 to 222, 223 to 253, 256 to 289, 290 to 321, 322 to 352, 353 to 387, 388 to 418, 420 to 454, 455 to 485, 488 to 522, 523 to 553, 554 to 588, 590 to 620, and 626 to 656; these read TLLNLNRRLTGLTRSGENRNALKLFADVHRCTTLRP, DQYSVSLAITTARHLRDTIFGGQVHCYAIRSGLLC, HSHVSNTLLSLYERLGNLASLKKKFDEIDEP, DVYSWTTLLSASFKLGDIEYAFEVFDKMPER, DVAIWNAMITGCKESGYHETSVELFREMHKLGVRH, DKFGFATILSMCDYGSLDFGKQVHSLVIKAGFFI, ASSVVNALITMYFNCQVVVDACLVFEETDVA, DQVTFNVVIDGLAGFKRDESLLVFRKMLEASLRP, TDLTFVSVMGSCSCAAMGHQVHGLAIKTGYEK, YTLVSNATMTMYSSFEDFGAAHKVFESLEEK, DLVTWNTMISSYNQAKLGKSAMSVYKRMHIIGVKP, DEFTFGSLLATSLDLDVLEMVQACIIKFGLS, KIEISNALISAYSKNGQIEKADLLFERSLRKNLIS, WNAIISGFYHNGFPFEGLERFSCLLESEVRI, DAYTLSTLLSICVSTSSLMLGSQTHAYVLRHGQFK, ETLIGNALINMYSQCGTIQNSLEVFNQMSEK, DVVSWNSLISAYSRHGEGENAVNTYKTMQDEGKVI, DAATFSAVLSACSHAGLVEEGLEIFNSMVEF, and NVDHFSCLVDLLGRAGHLDEAESLVKISEKT. Residues 663 to 737 form a type E motif; degenerate region; that stretch reads VWWALFSACA…KQRGCSWMRL (75 aa).

It belongs to the PPR family. PCMP-E subfamily.

This is Pentatricopeptide repeat-containing protein At3g49740 (PCMP-E84) from Arabidopsis thaliana (Mouse-ear cress).